A 921-amino-acid polypeptide reads, in one-letter code: Retinoblastoma-associated protein (921 aa).

A disordered region spans residues 1 to 36 (MPPKAPRRAAAAEPPPPPPPPPREDDPAQDSGPEEL). The residue at position 2 (Pro2) is a N,N-dimethylproline; by NTM1. Phosphoserine is present on residues Ser31 and Ser243. Residues Thr246, Thr350, Thr364, and Thr367 each carry the phosphothreonine modification. Residues 341-360 (PIDSFETERTPRKNNPDEEA) form a disordered region. A compositionally biased stretch (basic and acidic residues) spans 346-356 (ETERTPRKNNP). Residues 367 to 573 (TPVRTVMNTI…FDLIKQSKDG (207 aa)) form a domain A region. The interval 367-764 (TPVRTVMNTI…QRLKTNILQY (398 aa)) is pocket; binds T and E1A. Ser561 bears the Phosphoserine; by CDK2 mark. A spacer region spans residues 574 to 632 (EGPDNLEPACPLSLPLQGNHTAADMYLSPLRSPKKRTSTTRVNSAANTETQAASAFHTQ). Residues Ser601, Ser605, and Ser617 each carry the phosphoserine modification. The tract at residues 633–764 (KPLKSTSLAL…QRLKTNILQY (132 aa)) is domain B. The interaction with LIMD1 stretch occupies residues 756-921 (RLKTNILQYA…SKDVSNKEEK (166 aa)). Residues 764-921 (YASTRPPTLS…SKDVSNKEEK (158 aa)) are domain; mediates interaction with E4F1. 4 positions are modified to phosphoserine: Ser773, Ser781, Ser788, and Ser800. Lys803 is modified (N6-methyllysine; by SMYD2). A Phosphoserine modification is found at Ser804. Thr814, Thr816, Thr819, and Thr834 each carry phosphothreonine. Ser848 bears the Phosphoserine mark. Lys853 carries the N6-methyllysine; by SMYD2 modification. Positions 853–869 (KRSAEGGNPPKPLKKLR) match the Bipartite nuclear localization signal motif. Residues Lys866 and Lys867 each carry the N6-acetyllysine; by PCAF modification. The segment at 872 to 921 (IEGADEADGSKHLPAESKFQQKLAEMTSTRTRMQKQRMNESKDVSNKEEK) is disordered. The segment covering 908–921 (RMNESKDVSNKEEK) has biased composition (basic and acidic residues).

The protein belongs to the retinoblastoma protein (RB) family. As to quaternary structure, the hypophosphorylated form interacts with and sequesters the E2F1 transcription factor, thereby inhibiting E2F1 transcription. Interacts with heterodimeric E2F/DP transcription factor complexes containing TFDP1 and either E2F1/E2F, E2F3, E2F4 or E2F5, or TFDP2 and E2F4. Interacts (when hyperphosphorylated and hypophosphorylated) with PKP3; the interaction inhibits RB1 interaction with and repression of the transcription factor E2F1, potentially via sequestering RB1 to the cytoplasm. The unphosphorylated form interacts with EID1, ARID3B, KDM5A, SUV39H1, MJD2A/JHDM3A and THOC1. Interacts with the N-terminal domain of TAF1. Interacts with SNW1, ATAD5, AATF, DNMT1, LIN9, LMNA, KMT5B, KMT5C, PELP1, UHRF2, TMPO-alpha and USP4. Interacts with GRIP1 and UBR4. Interacts with ARID4A and KDM5B. Interacts with E4F1 and LIMD1. Interacts with SMARCA4/BRG1 and HDAC1. Interacts with USP4. Interacts (when methylated at Lys-853) with L3MBTL1. Binds to CDK1 and CDK2. Interacts with CHEK2; phosphorylates RB1. Interacts with PRMT2. Interacts with CEBPA. P-TEFB complex interacts with RB1; promotes phosphorylation of RB1. Interacts with RBBP9; the interaction disrupts RB1 binding to E2F1. Interacts with KAT2B/PCAF and EP300/P300. Interacts with PAX5. Interacts (phosphorylated and unphosphorylated) with BLCAP. May interact with NDC80. (Microbial infection) Interacts with adenovirus E1a protein. In terms of assembly, (Microbial infection) Interacts with SV40 large T antigen. Post-translationally, phosphorylated. Phosphorylated by CDK6 and CDK4, and subsequently by CDK2 at Ser-561 in G1, thereby releasing E2F1 which is then able to activate cell growth. Dephosphorylated at the late M phase. Phosphorylation of threonine residues in domain C promotes interaction between the C-terminal domain C and the Pocket domain, and thereby inhibits interactions with heterodimeric E2F/DP transcription factor complexes. Dephosphorylated at Ser-788 by calcineruin upon calcium stimulation. CDK3/cyclin-C-mediated phosphorylation at Ser-800 and Ser-804 is required for G0-G1 transition. Phosphorylated by CDK1 and CDK2 upon TGFB1-mediated apoptosis. In terms of processing, monomethylation at Lys-803 by SMYD2 enhances phosphorylation at Ser-800 and Ser-804, and promotes cell cycle progression. Monomethylation at Lys-853 by SMYD2 promotes interaction with L3MBTL1. N-terminus is methylated by METTL11A/NTM1. Acetylated in the skin. Acetylation at Lys-866 and Lys-867 regulates subcellular localization during keratinocytes differentiation. As to expression, expressed in the cell nuclei of renal tubules, hepatocytes and skeletal muscles. Expressed in skin (at protein level).

Its subcellular location is the nucleus. It localises to the cytoplasm. Functionally, tumor suppressor that is a key regulator of the G1/S transition of the cell cycle. The hypophosphorylated form binds transcription regulators of the E2F family, preventing transcription of E2F-responsive genes. Both physically blocks E2Fs transactivating domain and recruits chromatin-modifying enzymes that actively repress transcription. Cyclin and CDK-dependent phosphorylation of RB1 induces its dissociation from E2Fs, thereby activating transcription of E2F responsive genes and triggering entry into S phase. RB1 also promotes the G0-G1 transition upon phosphorylation and activation by CDK3/cyclin-C. Directly involved in heterochromatin formation by maintaining overall chromatin structure and, in particular, that of constitutive heterochromatin by stabilizing histone methylation. Recruits and targets histone methyltransferases SUV39H1, KMT5B and KMT5C, leading to epigenetic transcriptional repression. Controls histone H4 'Lys-20' trimethylation. Inhibits the intrinsic kinase activity of TAF1. Mediates transcriptional repression by SMARCA4/BRG1 by recruiting a histone deacetylase (HDAC) complex to the c-FOS promoter. In resting neurons, transcription of the c-FOS promoter is inhibited by BRG1-dependent recruitment of a phospho-RB1-HDAC1 repressor complex. Upon calcium influx, RB1 is dephosphorylated by calcineurin, which leads to release of the repressor complex. This chain is Retinoblastoma-associated protein (Rb1), found in Mus musculus (Mouse).